The sequence spans 240 residues: Probable transcriptional regulatory protein YrbC (240 aa).

This sequence belongs to the TACO1 family.

Its subcellular location is the cytoplasm. The sequence is that of Probable transcriptional regulatory protein YrbC (yrbC) from Bacillus subtilis (strain 168).